The chain runs to 217 residues: Thiopurine S-methyltransferase (217 aa).

Trp11, Leu46, Glu67, and Arg122 together coordinate S-adenosyl-L-methionine.

Belongs to the class I-like SAM-binding methyltransferase superfamily. TPMT family.

It is found in the cytoplasm. The enzyme catalyses S-adenosyl-L-methionine + a thiopurine = S-adenosyl-L-homocysteine + a thiopurine S-methylether.. The chain is Thiopurine S-methyltransferase from Vibrio atlanticus (strain LGP32) (Vibrio splendidus (strain Mel32)).